The sequence spans 241 residues: Uridylate kinase (241 aa).

Position 9 to 10 (9 to 10) interacts with ATP; it reads GS. Gly-44 is a binding site for UMP. Residues Gly-45 and Arg-49 each coordinate ATP. UMP-binding positions include Asp-66 and 114-120; that span reads VTPGQTT. Thr-140, Tyr-146, and Asp-149 together coordinate ATP. The interval 222-241 is disordered; that stretch reads TDVIPTGSEEPIYWTGSSDA.

Belongs to the UMP kinase family. In terms of assembly, homohexamer.

Its subcellular location is the cytoplasm. It carries out the reaction UMP + ATP = UDP + ADP. It functions in the pathway pyrimidine metabolism; CTP biosynthesis via de novo pathway; UDP from UMP (UMPK route): step 1/1. Inhibited by UTP. Catalyzes the reversible phosphorylation of UMP to UDP. The sequence is that of Uridylate kinase from Halorubrum lacusprofundi (strain ATCC 49239 / DSM 5036 / JCM 8891 / ACAM 34).